A 364-amino-acid polypeptide reads, in one-letter code: tRNA N6-adenosine threonylcarbamoyltransferase (364 aa).

Residues His-115 and His-119 each contribute to the Fe cation site. Residues 137–141 (LVSGG), Asp-170, Gly-183, and Asn-288 contribute to the substrate site. Asp-316 is a Fe cation binding site.

Belongs to the KAE1 / TsaD family. The cofactor is Fe(2+).

It is found in the cytoplasm. The enzyme catalyses L-threonylcarbamoyladenylate + adenosine(37) in tRNA = N(6)-L-threonylcarbamoyladenosine(37) in tRNA + AMP + H(+). Its function is as follows. Required for the formation of a threonylcarbamoyl group on adenosine at position 37 (t(6)A37) in tRNAs that read codons beginning with adenine. Is involved in the transfer of the threonylcarbamoyl moiety of threonylcarbamoyl-AMP (TC-AMP) to the N6 group of A37, together with TsaE and TsaB. TsaD likely plays a direct catalytic role in this reaction. The protein is tRNA N6-adenosine threonylcarbamoyltransferase of Bartonella bacilliformis (strain ATCC 35685 / KC583 / Herrer 020/F12,63).